The sequence spans 212 residues: MTEQKIPRATAKRLPIYYRYLNILLDADKTRVSSTELSEAVKVDSATIRRDFSYFGALGKRGYGYDVESLIKFFKKILNQDRLTNVALIGVGNLGHALLNFNFHQDGNVRISAAFDVNETIANTIQSGVPIYPMTDLRTQLEEQQIQVAILTVPSDVAQSVTDDAVAGGVKGILNFTPLRITVPKDVRVQNVDLTNELQTLIYFLEHYNSKE.

Positions 16–55 (IYYRYLNILLDADKTRVSSTELSEAVKVDSATIRRDFSYF) form a DNA-binding region, H-T-H motif. 90–95 (GVGNLG) lines the NAD(+) pocket.

It belongs to the transcriptional regulatory Rex family. In terms of assembly, homodimer.

Its subcellular location is the cytoplasm. Functionally, modulates transcription in response to changes in cellular NADH/NAD(+) redox state. The protein is Redox-sensing transcriptional repressor Rex of Levilactobacillus brevis (strain ATCC 367 / BCRC 12310 / CIP 105137 / JCM 1170 / LMG 11437 / NCIMB 947 / NCTC 947) (Lactobacillus brevis).